We begin with the raw amino-acid sequence, 414 residues long: Lipoprotein-releasing system transmembrane protein LolE (414 aa).

Helical transmembrane passes span 25 to 45 (LISV…IVGL), 275 to 295 (AMVL…VMAV), 317 to 337 (AIFV…GVII), and 377 to 397 (WLDV…ASWY).

The protein belongs to the ABC-4 integral membrane protein family. LolC/E subfamily.

The protein localises to the cell inner membrane. Its function is as follows. Part of an ATP-dependent transport system LolCDE responsible for the release of lipoproteins targeted to the outer membrane from the inner membrane. Such a release is dependent of the sorting-signal (absence of an Asp at position 2 of the mature lipoprotein) and of LolA. This chain is Lipoprotein-releasing system transmembrane protein LolE (lolE), found in Escherichia coli (strain K12).